We begin with the raw amino-acid sequence, 398 residues long: Enoyl-[acyl-carrier-protein] reductase [NADH] (398 aa).

NAD(+) contacts are provided by residues 48-53 (GSSTGY), 74-75 (FE), 111-112 (DA), and 139-140 (LA). Tyr225 lines the substrate pocket. Tyr235 acts as the Proton donor in catalysis. NAD(+) is bound by residues Lys244 and 273-275 (VVT).

The protein belongs to the TER reductase family. Monomer.

It catalyses the reaction a 2,3-saturated acyl-[ACP] + NAD(+) = a (2E)-enoyl-[ACP] + NADH + H(+). It functions in the pathway lipid metabolism; fatty acid biosynthesis. Its function is as follows. Involved in the final reduction of the elongation cycle of fatty acid synthesis (FAS II). Catalyzes the reduction of a carbon-carbon double bond in an enoyl moiety that is covalently linked to an acyl carrier protein (ACP). This Pseudomonas aeruginosa (strain UCBPP-PA14) protein is Enoyl-[acyl-carrier-protein] reductase [NADH].